Consider the following 637-residue polypeptide: Epithelial sodium channel subunit alpha (637 aa).

The tract at residues 1 to 34 (MGTASRGGSVKAEKMPEGEKTRQCKQETEQQQKE) is disordered. The Cytoplasmic segment spans residues 1–76 (MGTASRGGSV…VCSKKNKMKT (76 aa)). A compositionally biased stretch (basic and acidic residues) spans 11-34 (KAEKMPEGEKTRQCKQETEQQQKE). A helical transmembrane segment spans residues 77–97 (AFWSVLFILTFGLMYWQFGIL). Residues 98 to 548 (YREYFSYPVN…NQWSLWFGSS (451 aa)) are Extracellular-facing. 10 disulfide bridges follow: C125–C292, C217–C224, C269–C276, C380–C465, C402–C442, C402–C461, C406–C457, C415–C442, C415–C465, and C417–C431. The chain crosses the membrane as a helical span at residues 549–569 (VLSVMELAELILDFTVITFIL). Residues 570-637 (AFRWFRSKQW…PSKDGETGLE (68 aa)) lie on the Cytoplasmic side of the membrane.

It belongs to the amiloride-sensitive sodium channel (TC 1.A.6) family. SCNN1A subfamily. In terms of assembly, heterotrimer; containing an alpha/SCNN1A, a beta/SCNN1B and a gamma/SCNN1G subunit. In terms of tissue distribution, the long isoform has been found in cochlea, colon, and cartilage. The short isoform is only found in cochlea.

It localises to the apical cell membrane. Its subcellular location is the cell projection. The protein localises to the cilium. It is found in the cytoplasmic granule. The protein resides in the cytoplasm. It localises to the cytoplasmic vesicle. Its subcellular location is the secretory vesicle. The protein localises to the acrosome. It is found in the flagellum. The catalysed reaction is Na(+)(in) = Na(+)(out). Originally identified and characterized by its inhibition by the diuretic drug amiloride. Functionally, this is one of the three pore-forming subunits of the heterotrimeric epithelial sodium channel (ENaC), a critical regulator of sodium balance and fluid homeostasis. ENaC operates in epithelial tissues, where it mediates the electrodiffusion of sodium ions from extracellular fluid through the apical membrane of cells, with water following osmotically. The protein is Epithelial sodium channel subunit alpha of Gallus gallus (Chicken).